Consider the following 343-residue polypeptide: ATP-dependent 6-phosphofructokinase (343 aa).

ATP-binding positions include Gly-10 and 103–106; that span reads GEGT. Residue Glu-104 coordinates Mg(2+). Substrate contacts are provided by residues 126-128, Arg-163, 170-172, Glu-223, Arg-267, and 273-276; these read TID, MGR, and HVQR. Asp-128 acts as the Proton acceptor in catalysis.

The protein belongs to the phosphofructokinase type A (PFKA) family. Mixed-substrate PFK group III subfamily. In terms of assembly, homodimer or homotetramer. It depends on Mg(2+) as a cofactor.

It localises to the cytoplasm. The catalysed reaction is beta-D-fructose 6-phosphate + ATP = beta-D-fructose 1,6-bisphosphate + ADP + H(+). The protein operates within carbohydrate degradation; glycolysis; D-glyceraldehyde 3-phosphate and glycerone phosphate from D-glucose: step 3/4. Catalyzes the phosphorylation of D-fructose 6-phosphate to fructose 1,6-bisphosphate by ATP, the first committing step of glycolysis. The protein is ATP-dependent 6-phosphofructokinase of Mycobacterium leprae (strain TN).